Here is a 106-residue protein sequence, read N- to C-terminus: Thioredoxin-2 (106 aa).

A Thioredoxin domain is found at 2 to 106 (VYQIKDKADL…RLEDVIKANI (105 aa)). Residues C32 and C35 each act as nucleophile in the active site. Residues C32 and C35 are joined by a disulfide bond.

It belongs to the thioredoxin family.

Functionally, participates in various redox reactions through the reversible oxidation of its active center dithiol to a disulfide and catalyzes dithiol-disulfide exchange reactions. As a reducing substrate of peroxiredoxin 1, thioredoxin 2 is preferred over thioredoxin 1. The sequence is that of Thioredoxin-2 from Drosophila yakuba (Fruit fly).